Reading from the N-terminus, the 168-residue chain is Ribosome maturation factor RimP (168 aa).

The protein belongs to the RimP family.

The protein localises to the cytoplasm. In terms of biological role, required for maturation of 30S ribosomal subunits. This chain is Ribosome maturation factor RimP, found in Bordetella bronchiseptica (strain ATCC BAA-588 / NCTC 13252 / RB50) (Alcaligenes bronchisepticus).